A 290-amino-acid chain; its full sequence is Cilia- and flagella-associated protein 298 (290 aa).

This sequence belongs to the CFAP298 family. As to quaternary structure, interacts with dnaaf1/swt. Interacts with lrrc6/sea. Interacts with dvl (via DEP and PDZ domains). As to expression, strongly expressed in ciliated tissues of the embryonic trunk, including the pronephric ducts and spinal canal.

Its subcellular location is the cytoplasm. It localises to the cytoskeleton. The protein localises to the cilium basal body. Its function is as follows. Plays a role in motile cilium function, possibly by acting on outer dynein arm assembly. Seems to be important for initiation rather than maintenance of cilium motility. Required for correct positioning of cilia at the apical cell surface, suggesting an additional role in the planar cell polarity (PCP) pathway. May suppress canonical Wnt signaling activity. In Danio rerio (Zebrafish), this protein is Cilia- and flagella-associated protein 298.